The primary structure comprises 249 residues: Glucosamine-6-phosphate deaminase (249 aa).

Asp67 acts as the Proton acceptor; for enolization step in catalysis. Asn136 functions as the For ring-opening step in the catalytic mechanism. His138 functions as the Proton acceptor; for ring-opening step in the catalytic mechanism. Glu143 acts as the For ring-opening step in catalysis.

The protein belongs to the glucosamine/galactosamine-6-phosphate isomerase family. NagB subfamily.

The enzyme catalyses alpha-D-glucosamine 6-phosphate + H2O = beta-D-fructose 6-phosphate + NH4(+). The protein operates within amino-sugar metabolism; N-acetylneuraminate degradation; D-fructose 6-phosphate from N-acetylneuraminate: step 5/5. Its function is as follows. Catalyzes the reversible isomerization-deamination of glucosamine 6-phosphate (GlcN6P) to form fructose 6-phosphate (Fru6P) and ammonium ion. The sequence is that of Glucosamine-6-phosphate deaminase from Clostridioides difficile (strain 630) (Peptoclostridium difficile).